Consider the following 509-residue polypeptide: Histidine ammonia-lyase (509 aa).

Residues 142-144 constitute a cross-link (5-imidazolinone (Ala-Gly)); sequence ASG. S143 carries the post-translational modification 2,3-didehydroalanine (Ser).

The protein belongs to the PAL/histidase family. In terms of processing, contains an active site 4-methylidene-imidazol-5-one (MIO), which is formed autocatalytically by cyclization and dehydration of residues Ala-Ser-Gly.

Its subcellular location is the cytoplasm. It carries out the reaction L-histidine = trans-urocanate + NH4(+). It functions in the pathway amino-acid degradation; L-histidine degradation into L-glutamate; N-formimidoyl-L-glutamate from L-histidine: step 1/3. The polypeptide is Histidine ammonia-lyase (Pseudomonas aeruginosa (strain UCBPP-PA14)).